The primary structure comprises 545 residues: Beta-sesquiphellandrene synthase (545 aa).

Residues D299, D303, N443, S447, and E451 each coordinate Mg(2+). Residues 299–303 (DDIMD) carry the DDXXD motif motif.

This sequence belongs to the terpene synthase family. It depends on Mg(2+) as a cofactor. Mn(2+) serves as cofactor.

The protein localises to the cytoplasm. The catalysed reaction is (2E,6E)-farnesyl diphosphate = beta-sesquiphellandrene + diphosphate. Its pathway is secondary metabolite biosynthesis; terpenoid biosynthesis. Sesquiterpene synthase converting farnesyl diphosphate into beta-sesquiphellandrene and six minor products, zingiberene, 7-epi-sesquithujene, sesquisabinene A, (E)-alpha-bergamotene, (E)-beta-farnesene and beta-bisabolene. Can also accept geranyl diphosphate as substrate, producing nine monoterpenes, with myrcene and limonene as the major products. The polypeptide is Beta-sesquiphellandrene synthase (TPS2) (Sorghum bicolor (Sorghum)).